The primary structure comprises 339 residues: Heat-inducible transcription repressor HrcA (339 aa).

It belongs to the HrcA family.

Its function is as follows. Negative regulator of class I heat shock genes (grpE-dnaK-dnaJ and groELS operons). Prevents heat-shock induction of these operons. The chain is Heat-inducible transcription repressor HrcA from Clostridium perfringens (strain SM101 / Type A).